The following is a 188-amino-acid chain: Tetratricopeptide repeat protein 36 (188 aa).

TPR repeat units follow at residues 50-83, 85-117, and 122-155; these read SKAL…LPER, SAYN…SGGR, and RQGF…GSPF.

The protein belongs to the TTC36 family.

The polypeptide is Tetratricopeptide repeat protein 36 (TTC36) (Bos taurus (Bovine)).